A 447-amino-acid chain; its full sequence is Vasoactive intestinal polypeptide receptor (447 aa).

Residues Met1–Val103 are Extracellular-facing. 3 disulfide bridges follow: Cys15–Cys36, Cys27–Cys69, and Cys50–Cys86. N-linked (GlcNAc...) asparagine glycosylation is found at Asn17, Asn22, Asn64, and Asn91. The chain crosses the membrane as a helical span at residues Lys104–Ser128. Topologically, residues Arg129–Arg135 are cytoplasmic. A helical transmembrane segment spans residues Asn136–Val155. Residues Lys156 to Lys178 lie on the Extracellular side of the membrane. Residue Asn169 is glycosylated (N-linked (GlcNAc...) asparagine). The cysteines at positions 177 and 247 are disulfide-linked. The helical transmembrane segment at Ala179–Leu202 threads the bilayer. Topologically, residues His203–Tyr216 are cytoplasmic. Residues Phe217 to Ala238 form a helical membrane-spanning segment. The Extracellular segment spans residues Lys239–Leu256. A helical membrane pass occupies residues Phe257–Ile280. At Arg281–Lys305 the chain is on the cytoplasmic side. The helical transmembrane segment at Ser306–Pro325 threads the bilayer. Residues Glu326–Asp337 lie on the Extracellular side of the membrane. Residues Leu338 to Gly357 traverse the membrane as a helical segment. The Cytoplasmic portion of the chain corresponds to Glu358 to Ser447.

This sequence belongs to the G-protein coupled receptor 2 family.

The protein localises to the cell membrane. In terms of biological role, this is a receptor for VIP. The activity of this receptor is mediated by G proteins which activate adenylyl cyclase. This chain is Vasoactive intestinal polypeptide receptor (vipr1), found in Carassius auratus (Goldfish).